The sequence spans 627 residues: Dual specificity testis-specific protein kinase 1 (627 aa).

The tract at residues 1 to 36 is disordered; the sequence is MAGERPPLRGPGPGEAPGEGPGGAGGGPGRGRPSSY. Positions 11 to 30 are enriched in gly residues; the sequence is PGPGEAPGEGPGGAGGGPGR. The region spanning 52–309 is the Protein kinase domain; it reads FDCAEKIGAG…TEITQHLEQI (258 aa). Residues 58-66 and lysine 81 contribute to the ATP site; that span reads IGAGFFSEV. The active-site Proton acceptor is aspartate 170. Serine 215 is subject to Phosphoserine; by autocatalysis. Residues 316–330 are compositionally biased toward low complexity; it reads ATPLAKPPLTKAPLT. 4 disordered regions span residues 316–373, 436–485, 500–519, and 532–565; these read ATPL…SWGD, RCRS…GLAP, CSSA…NNNP, and REPW…EPEE. The residue at position 338 (arginine 338) is an Omega-N-methylarginine. Residues 348–357 are compositionally biased toward basic and acidic residues; sequence PDPRLSRSRS. Residues 421–525 form a required for interaction with YWHAB region; that stretch reads VTTPDILVQP…NNNPPAVVVN (105 aa). Residues 528 to 625 form a required for interaction with PARVA region; the sequence is QGWAREPWNR…PTPSLQLPGA (98 aa). The tract at residues 528-627 is required for interaction with SPRED1 and SPRY2. Required for TESK1-mediated dephosphorylation of SPRY2 and SPRY2 inhibition of ERK phosphorylation; the sequence is QGWAREPWNR…PSLQLPGARS (100 aa).

Belongs to the protein kinase superfamily. TKL Ser/Thr protein kinase family. Interacts (via both C- and N-termini) with SPRY4 (via C-terminus); the interaction inhibits TESK1 kinase activity. Interacts with TAOK1; the interaction inhibits TAOK1 kinase activity. Interacts (via C-terminus) with SPRED1 (via C-terminus); the interaction inhibits TESK1 kinase activity. Interacts (via C-terminus) with PARVA/PARVIN (via C-terminus); the interaction inhibits TESK1 kinase activity. Interacts with YWHAB/14-3-3 beta; the interaction is dependent on the phosphorylation of TESK1 Ser-439 and inhibits TESK1 kinase activity. Interacts with SPRY1, SPRY3 and SPRED2. Interacts (via C-terminus) with SPRY2 (via C-terminus); the interaction disrupts SPRY2 interaction with PPP2CA/PP2A-C, possibly by vesicular sequestration of SPRY2. Therefore dephosphorylation of SPRY2 by the serine/threonine-protein phosphatase 2A (PP2A) holoenzyme is lost, inhibiting its interaction with GRB2. Mg(2+) is required as a cofactor. It depends on Mn(2+) as a cofactor. Post-translationally, autophosphorylated on serine and tyrosine residues. As to expression, expressed in testes and brain (at protein level).

It localises to the cytoplasm. It is found in the perinuclear region. Its subcellular location is the cytoskeleton. The protein localises to the microtubule organizing center. The protein resides in the centrosome. It localises to the cell projection. It is found in the lamellipodium. It carries out the reaction L-seryl-[protein] + ATP = O-phospho-L-seryl-[protein] + ADP + H(+). The catalysed reaction is L-threonyl-[protein] + ATP = O-phospho-L-threonyl-[protein] + ADP + H(+). The enzyme catalyses L-tyrosyl-[protein] + ATP = O-phospho-L-tyrosyl-[protein] + ADP + H(+). Activated by autophosphorylation on Ser-215. Kinase activity is inhibited by SPRED1. Its function is as follows. Dual specificity protein kinase activity catalyzing autophosphorylation and phosphorylation of exogenous substrates on both serine/threonine and tyrosine residues. Regulates the cellular cytoskeleton by enhancing actin stress fiber formation via phosphorylation of cofilin and by preventing microtubule breakdown via inhibition of TAOK1/MARKK kinase activity. Inhibits podocyte motility via regulation of actin cytoskeletal dynamics and phosphorylation of CFL1. Positively regulates integrin-mediated cell spreading, via phosphorylation of cofilin. Suppresses ciliogenesis via multiple pathways; phosphorylation of CFL1, suppression of ciliary vesicle directional trafficking to the ciliary base, and by facilitating YAP1 nuclear localization where it acts as a transcriptional corepressor of the TEAD4 target genes AURKA and PLK1. Probably plays a central role at and after the meiotic phase of spermatogenesis. This is Dual specificity testis-specific protein kinase 1 (Tesk1) from Mus musculus (Mouse).